Consider the following 168-residue polypeptide: Protein-export protein SecB (168 aa).

Belongs to the SecB family. In terms of assembly, homotetramer, a dimer of dimers. One homotetramer interacts with 1 SecA dimer.

The protein localises to the cytoplasm. One of the proteins required for the normal export of preproteins out of the cell cytoplasm. It is a molecular chaperone that binds to a subset of precursor proteins, maintaining them in a translocation-competent state. It also specifically binds to its receptor SecA. This chain is Protein-export protein SecB, found in Rhizobium meliloti (strain 1021) (Ensifer meliloti).